Here is a 607-residue protein sequence, read N- to C-terminus: MEDVEVRFAHLLQPIRDLTKNWEVDVAAQLGEYLEELDQICISFDEGKTTMNFIEAALLIQGSACVYSKKVEYLYSLVYQALDFISGKRRAKQLSLVQEDGSKKTVNSETPCETENEFLSLDDFPDSRANVDLKNDQASSELLIIPLLPMALVAPDEVEKNSSPLYSCQGDILASRKDFRMNTCMPNPRGCFMLDPVGMCPVEPVVPVEPYPMSRSQKDPEDAEEQPMEVSRNGSPVPVPDISQEPDGPALSGGEEDAEDGAEPLEVALEPAEPRTSQQSAILPRRYMLRERQGAPEPASRLQETPDPWQSLDPFDSLESKVFQKGKPYSVPPGVEEAPGQKRKRKGATKLQDFHKWYLDAYAEHPDGRRARRKGPTFADMEVLYWKHVKEQLETLQKLRRRKINERWLPGAKQDLWPTEEDRLEESLEDLGVADDFLEPEEYVEEPAGVMPEEAADLDAEAMPESLRYEELVRRNVELFIATSQKFIQETELSQRIRDWEDTIQPLLQEQEQHVPFDIHIYGDQLASRFPQLNEWCPFSELVAGQPAFEVCRSMLASLQLANDYTVEITQQPGLEAAVDTMSLRLLTHQRAHTRFQTYAAPSMAQP.

Thr19 is modified (phosphothreonine). Phosphoserine occurs at positions 95, 231, 235, and 252. Disordered regions lie at residues 211–312 (YPMS…WQSL) and 325–347 (KGKPYSVPPGVEEAPGQKRKRKG). Residues 254–263 (GEEDAEDGAE) show a composition bias toward acidic residues. Ser494 bears the Phosphoserine mark.

It belongs to the CND2 H2 (condensin-2 subunit 2) family. Component of the condensin-2 complex, which contains the SMC2 and SMC4 heterodimer, and three non SMC subunits, NCAPG2, NCAPH2 and NCAPD3 that probably regulate the complex.

It is found in the nucleus. Functionally, regulatory subunit of the condensin-2 complex, a complex that seems to provide chromosomes with an additional level of organization and rigidity and in establishing mitotic chromosome architecture. May promote the resolution of double-strand DNA catenanes (intertwines) between sister chromatids. Condensin-mediated compaction likely increases tension in catenated sister chromatids, providing directionality for type II topoisomerase-mediated strand exchanges toward chromatid decatenation. Required for decatenation of chromatin bridges at anaphase. Early in neurogenesis, may play an essential role to ensure accurate mitotic chromosome condensation in neuron stem cells, ultimately affecting neuron pool and cortex size. Seems to have lineage-specific role in T-cell development. The protein is Condensin-2 complex subunit H2 of Mus musculus (Mouse).